The sequence spans 430 residues: Enolase (430 aa).

Glutamine 163 serves as a coordination point for (2R)-2-phosphoglycerate. The Proton donor role is filled by glutamate 205. Mg(2+) contacts are provided by aspartate 242, glutamate 287, and aspartate 314. Residues lysine 339, arginine 368, serine 369, and lysine 390 each contribute to the (2R)-2-phosphoglycerate site. The active-site Proton acceptor is the lysine 339.

Belongs to the enolase family. It depends on Mg(2+) as a cofactor.

It localises to the cytoplasm. It is found in the secreted. The protein resides in the cell surface. It catalyses the reaction (2R)-2-phosphoglycerate = phosphoenolpyruvate + H2O. It participates in carbohydrate degradation; glycolysis; pyruvate from D-glyceraldehyde 3-phosphate: step 4/5. Its function is as follows. Catalyzes the reversible conversion of 2-phosphoglycerate (2-PG) into phosphoenolpyruvate (PEP). It is essential for the degradation of carbohydrates via glycolysis. The sequence is that of Enolase from Geobacillus sp. (strain WCH70).